The chain runs to 380 residues: SAM and SH3 domain-containing protein 3 (380 aa).

Residues 1–76 (MLRRKPSNAS…KSGKKLGKKW (76 aa)) are disordered. Residues 22–41 (LQRSSSFKDFAKSKPSSPVV) are compositionally biased toward low complexity. 3 positions are modified to phosphoserine: Ser-27, Ser-34, and Ser-42. Position 61 is a phosphothreonine (Thr-61). Ser-97 carries the post-translational modification Phosphoserine. 3 disordered regions span residues 98 to 174 (EEMA…TGPF), 237 to 256 (VGHA…KPKT), and 318 to 380 (TGSE…AGAP). At Thr-103 the chain carries Phosphothreonine. Ser-110 carries the phosphoserine modification. Thr-112 carries the phosphothreonine modification. A Phosphoserine modification is found at Ser-113. Position 116 is a phosphotyrosine (Tyr-116). A Phosphoserine modification is found at Ser-120. Residues 143–152 (RQASTGSELC) show a composition bias toward polar residues. Over residues 153–164 (SPSPGSGSFGEE) the composition is skewed to low complexity. One can recognise an SH3 domain in the interval 173–234 (PFCGRARVHT…KFIYVDVLPE (62 aa)). Basic residues predominate over residues 241-255 (RPSRRQSKGKRPKPK). The SAM domain maps to 252 to 316 (PKPKTLHELL…LTAAELLLDY (65 aa)). Thr-318 bears the Phosphothreonine mark. Over residues 318–327 (TGSEEAEEGA) the composition is skewed to acidic residues. Position 320 is a phosphoserine (Ser-320).

May function as a signaling adapter protein in lymphocytes. This chain is SAM and SH3 domain-containing protein 3 (SASH3), found in Homo sapiens (Human).